We begin with the raw amino-acid sequence, 224 residues long: MLLARAFARRSLRAGLWCRQKHTLPDLPYDYGALEPTISAEIMQLHHSKHHQTYVNNLNVAEEKLAEAKEKGDVSTIISLAPALRFNGGGHINHSIFWQNLSADGGEPEGELLAAINRDFGSVENMKNQLSAQTVAVQGSGWGWLGYIAEGALQIATCPNQDPLEATTGLVPLFGIDVWEHAYYLQYKNVRRIMLKPSGISLIGRISLQGSMQQSKNATSCSGA.

A mitochondrion-targeting transit peptide spans 1 to 20 (MLLARAFARRSLRAGLWCRQ). Mn(2+) is bound by residues His-46, His-94, Asp-177, and His-181.

Belongs to the iron/manganese superoxide dismutase family. In terms of assembly, homotetramer. Mn(2+) serves as cofactor.

Its subcellular location is the mitochondrion matrix. It catalyses the reaction 2 superoxide + 2 H(+) = H2O2 + O2. In terms of biological role, destroys superoxide anion radicals which are normally produced within the cells and which are toxic to biological systems. This chain is Superoxide dismutase [Mn], mitochondrial, found in Charybdis feriata (Crucifix crab).